The following is a 328-amino-acid chain: Tetraacyldisaccharide 4'-kinase (328 aa).

58 to 65 (TMGGAGKT) contacts ATP.

Belongs to the LpxK family.

It catalyses the reaction a lipid A disaccharide + ATP = a lipid IVA + ADP + H(+). It functions in the pathway glycolipid biosynthesis; lipid IV(A) biosynthesis; lipid IV(A) from (3R)-3-hydroxytetradecanoyl-[acyl-carrier-protein] and UDP-N-acetyl-alpha-D-glucosamine: step 6/6. Its function is as follows. Transfers the gamma-phosphate of ATP to the 4'-position of a tetraacyldisaccharide 1-phosphate intermediate (termed DS-1-P) to form tetraacyldisaccharide 1,4'-bis-phosphate (lipid IVA). The polypeptide is Tetraacyldisaccharide 4'-kinase (Phenylobacterium zucineum (strain HLK1)).